We begin with the raw amino-acid sequence, 638 residues long: Threonine--tRNA ligase (638 aa).

The TGS domain maps to 1-61; it reads MPDIKLPDGS…EQNADLAIIT (61 aa). The segment at 242–533 is catalytic; the sequence is DHRRLGKQYD…LIENFAGALP (292 aa). Zn(2+) contacts are provided by cysteine 333, histidine 384, and histidine 510.

The protein belongs to the class-II aminoacyl-tRNA synthetase family. In terms of assembly, homodimer. Zn(2+) is required as a cofactor.

Its subcellular location is the cytoplasm. The enzyme catalyses tRNA(Thr) + L-threonine + ATP = L-threonyl-tRNA(Thr) + AMP + diphosphate + H(+). Functionally, catalyzes the attachment of threonine to tRNA(Thr) in a two-step reaction: L-threonine is first activated by ATP to form Thr-AMP and then transferred to the acceptor end of tRNA(Thr). Also edits incorrectly charged L-seryl-tRNA(Thr). This Dechloromonas aromatica (strain RCB) protein is Threonine--tRNA ligase.